The sequence spans 403 residues: Keratin, type I cytoskeletal 19 (403 aa).

The interval 1-82 (MTSYSYRQTS…AVSDGLLSGN (82 aa)) is head. Position 7 is an omega-N-methylarginine (Arg-7). Phosphoserine is present on residues Ser-14 and Ser-22. Arg-24 bears the Asymmetric dimethylarginine; alternate mark. Arg-24 is subject to Omega-N-methylarginine; alternate. The residue at position 27 (Ser-27) is a Phosphoserine. Position 32 is an omega-N-methylarginine (Arg-32). 2 positions are modified to phosphoserine: Ser-35 and Ser-40. 2 positions are modified to omega-N-methylarginine: Arg-43 and Arg-51. Ser-57 bears the Phosphoserine mark. Position 64 is an omega-N-methylarginine (Arg-64). Ser-67 and Ser-75 each carry phosphoserine. The tract at residues 83–118 (EKITMQNLNDRLASYLDKVRALEQANGELEVKIRDW) is coil 1A. Positions 83–394 (EKITMQNLND…SLLEGQEAHY (312 aa)) constitute an IF rod domain. Residues 119–136 (YQKQGPGPSRDYNHYFKT) form a linker 1 region. Positions 137–228 (IEDLRDKILG…KNHEEEITAL (92 aa)) are coil 1B. Residues 229–251 (RSQVGGQVSVEVDSTPGVDLAKI) form a linker 12 region. Positions 247-393 (DLAKILSEMR…RSLLEGQEAH (147 aa)) are necessary for interaction with PNN. The tract at residues 252–390 (LSEMRSQYEI…ATYRSLLEGQ (139 aa)) is coil 2. At Thr-326 the chain carries Phosphothreonine. The tract at residues 391–403 (EAHYNNLPTPKAI) is rod-like helical tail. Residue Tyr-394 is modified to Phosphotyrosine.

It belongs to the intermediate filament family. In terms of assembly, heterotetramer of two type I and two type II keratins. Interacts with PNN and the actin-binding domain of DMD.

In terms of biological role, involved in the organization of myofibers. Together with KRT8, helps to link the contractile apparatus to dystrophin at the costameres of striated muscle. The chain is Keratin, type I cytoskeletal 19 (Krt19) from Mus musculus (Mouse).